The primary structure comprises 203 residues: Thymidine kinase (203 aa).

ATP is bound by residues 9–16 (ATMNAGKT) and 87–90 (DEAQ). The active-site Proton acceptor is the Glu-88. Residues Cys-145, Cys-147, Cys-181, and His-184 each coordinate Zn(2+).

It belongs to the thymidine kinase family. As to quaternary structure, homotetramer.

Its subcellular location is the cytoplasm. It carries out the reaction thymidine + ATP = dTMP + ADP + H(+). This chain is Thymidine kinase, found in Mesorhizobium japonicum (strain LMG 29417 / CECT 9101 / MAFF 303099) (Mesorhizobium loti (strain MAFF 303099)).